The sequence spans 425 residues: Riboflavin biosynthesis protein RibBA (425 aa).

The DHBP synthase stretch occupies residues 1 to 204 (MTRLDSVERA…IADLIEWRRK (204 aa)). D-ribulose 5-phosphate-binding positions include 28–29 (RE), Asp33, 141–145 (RPGHT), and Glu165. A Mg(2+)-binding site is contributed by Glu29. His144 is a Mg(2+) binding site. The tract at residues 205-425 (HEKHIERVAE…HLPGEFGGAL (221 aa)) is GTP cyclohydrolase II. Residue 259 to 263 (RVHSE) participates in GTP binding. Zn(2+)-binding residues include Cys264, Cys275, and Cys277. GTP contacts are provided by residues Gln280, 303–305 (EGR), and Thr325. Asp337 acts as the Proton acceptor; for GTP cyclohydrolase activity in catalysis. The active-site Nucleophile; for GTP cyclohydrolase activity is the Arg339. GTP-binding residues include Thr360 and Lys365.

This sequence in the N-terminal section; belongs to the DHBP synthase family. The protein in the C-terminal section; belongs to the GTP cyclohydrolase II family. Mg(2+) is required as a cofactor. The cofactor is Mn(2+). It depends on Zn(2+) as a cofactor.

The enzyme catalyses D-ribulose 5-phosphate = (2S)-2-hydroxy-3-oxobutyl phosphate + formate + H(+). The catalysed reaction is GTP + 4 H2O = 2,5-diamino-6-hydroxy-4-(5-phosphoribosylamino)-pyrimidine + formate + 2 phosphate + 3 H(+). It functions in the pathway cofactor biosynthesis; riboflavin biosynthesis; 2-hydroxy-3-oxobutyl phosphate from D-ribulose 5-phosphate: step 1/1. It participates in cofactor biosynthesis; riboflavin biosynthesis; 5-amino-6-(D-ribitylamino)uracil from GTP: step 1/4. Its function is as follows. Catalyzes the conversion of D-ribulose 5-phosphate to formate and 3,4-dihydroxy-2-butanone 4-phosphate. Catalyzes the conversion of GTP to 2,5-diamino-6-ribosylamino-4(3H)-pyrimidinone 5'-phosphate (DARP), formate and pyrophosphate. This is Riboflavin biosynthesis protein RibBA from Mycobacterium marinum (strain ATCC BAA-535 / M).